A 254-amino-acid chain; its full sequence is 5'-nucleotidase SurE (254 aa).

The a divalent metal cation site is built by D8, D9, S40, and N93.

The protein belongs to the SurE nucleotidase family. A divalent metal cation serves as cofactor.

The protein resides in the cytoplasm. The catalysed reaction is a ribonucleoside 5'-phosphate + H2O = a ribonucleoside + phosphate. In terms of biological role, nucleotidase that shows phosphatase activity on nucleoside 5'-monophosphates. In Methylorubrum populi (strain ATCC BAA-705 / NCIMB 13946 / BJ001) (Methylobacterium populi), this protein is 5'-nucleotidase SurE.